The primary structure comprises 635 residues: Threonine--tRNA ligase (635 aa).

Residues 1–61 (MVSIRLPDGS…DRDASLAIVT (61 aa)) enclose the TGS domain. The tract at residues 242-533 (DHRKLGKQLD…LIEHHAGAMP (292 aa)) is catalytic. 3 residues coordinate Zn(2+): Cys-333, His-384, and His-510.

This sequence belongs to the class-II aminoacyl-tRNA synthetase family. Homodimer. Requires Zn(2+) as cofactor.

Its subcellular location is the cytoplasm. The catalysed reaction is tRNA(Thr) + L-threonine + ATP = L-threonyl-tRNA(Thr) + AMP + diphosphate + H(+). Functionally, catalyzes the attachment of threonine to tRNA(Thr) in a two-step reaction: L-threonine is first activated by ATP to form Thr-AMP and then transferred to the acceptor end of tRNA(Thr). Also edits incorrectly charged L-seryl-tRNA(Thr). In Burkholderia lata (strain ATCC 17760 / DSM 23089 / LMG 22485 / NCIMB 9086 / R18194 / 383), this protein is Threonine--tRNA ligase.